We begin with the raw amino-acid sequence, 209 residues long: 8-oxoguanine DNA glycosylase/AP lyase (209 aa).

Active-site residues include lysine 131 and aspartate 149.

It belongs to the type-2 OGG1 family.

It carries out the reaction 2'-deoxyribonucleotide-(2'-deoxyribose 5'-phosphate)-2'-deoxyribonucleotide-DNA = a 3'-end 2'-deoxyribonucleotide-(2,3-dehydro-2,3-deoxyribose 5'-phosphate)-DNA + a 5'-end 5'-phospho-2'-deoxyribonucleoside-DNA + H(+). Its function is as follows. Catalyzes the excision of an oxidatively damaged form of guanine (7,8-dihydro-8-oxoguanine = 8-oxoG) from DNA. Also cleaves the DNA backbone at apurinic/apyrimidinic sites (AP sites). This Korarchaeum cryptofilum (strain OPF8) protein is 8-oxoguanine DNA glycosylase/AP lyase.